A 153-amino-acid chain; its full sequence is Cytochrome c-type biogenesis protein CcmE (153 aa).

Topologically, residues 1-8 (MTPVQRRR) are cytoplasmic. A helical; Signal-anchor for type II membrane protein membrane pass occupies residues 9 to 29 (LAWVLLALLASGLATALVAMA). Residues 30-153 (LERNIAYLYT…DVPVTAPEVR (124 aa)) lie on the Extracellular side of the membrane. Positions 123 and 127 each coordinate heme.

It belongs to the CcmE/CycJ family.

It is found in the cell membrane. Heme chaperone required for the biogenesis of c-type cytochromes. Transiently binds heme delivered by CcmC and transfers the heme to apo-cytochromes in a process facilitated by CcmF and CcmH. This Stenotrophomonas maltophilia (strain K279a) protein is Cytochrome c-type biogenesis protein CcmE.